The chain runs to 444 residues: Sonic hedgehog protein (444 aa).

A signal peptide spans 1-24; sequence MLVATQSLLLLSFICTLVTPPGLA. Cys-25 carries the N-palmitoyl cysteine lipid modification. The Cardin-Weintraub motif lies at 33 to 39; it reads KRRHPKK. The Ca(2+) site is built by Glu-90, Glu-91, Asp-96, Thr-126, Glu-127, Asp-130, and Asp-132. Residues His-141, Asp-148, and His-183 each contribute to the Zn(2+) site. Gly-198 carries the Cholesterol glycine ester lipid modification. 3 tandem repeats follow at residues 386-393, 394-401, and 403-409. Residues 386–409 are 3 X 8 AA tandem repeats of Q-V-D-L-Q-S-H-H; the sequence is QVDLQSHHQVDLQSHHQVDLQSHH.

Belongs to the hedgehog family. As to quaternary structure, interacts with HHATL/GUP1 which negatively regulates HHAT-mediated palmitoylation of the SHH N-terminus. Interacts with BOC and CDON. Interacts with HHIP. Interacts with DISP1 via its cholesterol anchor. Interacts with SCUBE2. Multimer. The C-terminal domain displays an autoproteolysis activity and a cholesterol transferase activity. Both activities result in the cleavage of the full-length protein and covalent attachment of a cholesterol moiety to the C-terminal of the newly generated N-terminal fragment (ShhN). Cholesterylation is required for the sonic hedgehog protein N-product targeting to lipid rafts and multimerization. ShhN is the active species in both local and long-range signaling, whereas the C-product (ShhC) is degraded in the reticulum endoplasmic. In terms of processing, N-palmitoylation by HHAT of ShhN is required for sonic hedgehog protein N-product multimerization and full activity. It is a prerequisite for the membrane-proximal positioning and the subsequent shedding of this N-terminal peptide. Post-translationally, the lipidated N- and C-terminal peptides of ShhNp can be cleaved (shedding). The N-terminal palmitoylated peptide is cleaved at the Cardin-Weintraub (CW) motif site. The cleavage reduced the interactions with heparan sulfate. The cleavage is enhanced by SCUBE2. Strongly expressed in notochord and neural floor plate during embryogenesis. In tadpole, high expression is observed in pancreas/stomach, moderate expression in tail, and low expression in intestine, brain, and hind limb.

The protein localises to the endoplasmic reticulum membrane. It localises to the golgi apparatus membrane. It is found in the cell membrane. It carries out the reaction glycyl-L-cysteinyl-[protein] + cholesterol + H(+) = [protein]-C-terminal glycyl cholesterol ester + N-terminal L-cysteinyl-[protein]. In terms of biological role, the C-terminal part of the sonic hedgehog protein precursor displays an autoproteolysis and a cholesterol transferase activity. Both activities result in the cleavage of the full-length protein into two parts (ShhN and ShhC) followed by the covalent attachment of a cholesterol moiety to the C-terminal of the newly generated ShhN. Both activities occur in the endoplasmic reticulum. Once cleaved, ShhC is degraded in the endoplasmic reticulum. The dually lipidated sonic hedgehog protein N-product (ShhNp) is a morphogen which is essential for a variety of patterning events during development. Induces ventral cell fate in the neural tube and somites. Involved in the patterning of the anterior-posterior axis of the developing limb bud. Essential for axon guidance. Binds to the patched (PTCH1) receptor, which functions in association with smoothened (SMO), to activate the transcription of target genes. In the absence of SHH, PTCH1 represses the constitutive signaling activity of SMO. In Xenopus laevis (African clawed frog), this protein is Sonic hedgehog protein.